Here is a 77-residue protein sequence, read N- to C-terminus: MAKQLCSYMFISMFILSAFLALPSAEGGATIKKCVVDVKLSKPCTFQECQPLCLQKYNGNGLCPGDDNNICACVYNC.

The N-terminal stretch at Met-1 to Gly-27 is a signal peptide. Intrachain disulfides connect Cys-34/Cys-77, Cys-44/Cys-63, Cys-49/Cys-71, and Cys-53/Cys-73.

It belongs to the DEFL family.

The protein resides in the secreted. This chain is Putative defensin-like protein 162 (LCR37), found in Arabidopsis thaliana (Mouse-ear cress).